The following is a 476-amino-acid chain: Serine/threonine-protein kinase Chk1 (476 aa).

Residues 1–265 (MAVPFVEDWD…IPDIKKDRWY (265 aa)) are interaction with CLSPN. Residues 9-265 (WDLVQTLGEG…IPDIKKDRWY (257 aa)) form the Protein kinase domain. ATP contacts are provided by residues 15–23 (LGEGAYGEV) and K38. The active-site Proton acceptor is the D130. K132 participates in a covalent cross-link: Glycyl lysine isopeptide (Lys-Gly) (interchain with G-Cter in ubiquitin). A disordered region spans residues 270-327 (KKGAKRPRVTSGGVSESPSGFSKHIQSNLDFSPVNSASSEENVKYSSSQPEPRTGLSL). Phosphoserine is present on residues S280, S286, S296, and S301. The segment covering 281 to 320 (GGVSESPSGFSKHIQSNLDFSPVNSASSEENVKYSSSQPE) has biased composition (polar residues). Residue S317 is modified to Phosphoserine; by ATM and ATR. Residue S331 is modified to Phosphoserine. Phosphoserine; by ATM and ATR is present on S345. An autoinhibitory region region spans residues 391–476 (QCLKETCEKL…SSQKIWLPAT (86 aa)). A Glycyl lysine isopeptide (Lys-Gly) (interchain with G-Cter in ubiquitin) cross-link involves residue K436. A phosphoserine mark is found at S467 and S468.

It belongs to the protein kinase superfamily. CAMK Ser/Thr protein kinase family. NIM1 subfamily. Interacts (phosphorylated by ATR) with RAD51. Interacts with and phosphorylates CLSPN, an adapter protein that regulates the ATR-dependent phosphorylation of CHEK1. Interacts with BRCA1. Interacts with and phosphorylates CDC25A, CDC25B and CDC25C. Interacts with FBXO6, which regulates CHEK1. Interacts with PPM1D, which regulates CHEK1 through dephosphorylation. Interacts with TIMELESS; DNA damage-dependent. Interacts with FEM1B; activates CHEK1 in response to stress. Interacts with TLK1. Interacts with XPO1 and YWHAZ. Interacts with CDK5RAP3; antagonizes CHEK1. As to quaternary structure, isoform 1 associates with isoform 2, the interaction is disrupted upon phosphorylation by ATR. Post-translationally, phosphorylated by ATR in a RAD17-dependent manner in response to ultraviolet irradiation and inhibition of DNA replication. Phosphorylated by ATM in response to ionizing irradiation. ATM and ATR can both phosphorylate Ser-317 and Ser-345 and this results in enhanced kinase activity. Phosphorylation at Ser-345 induces a change in the conformation of the protein, activates the kinase activity and is a prerequisite for interaction with FBXO6 and subsequent ubiquitination at Lys-436. Phosphorylation at Ser-345 also increases binding to 14-3-3 proteins and promotes nuclear retention. Conversely, dephosphorylation at Ser-345 by PPM1D may contribute to exit from checkpoint mediated cell cycle arrest. Phosphorylation at Ser-280 by AKT1/PKB, may promote mono and/or diubiquitination. Also phosphorylated at undefined residues during mitotic arrest, resulting in decreased activity. In terms of processing, ubiquitinated. Mono or diubiquitination promotes nuclear exclusion. The activated form (phosphorylated on Ser-345) is polyubiquitinated at Lys-436 by some SCF-type E3 ubiquitin ligase complex containing FBXO6 promoting its degradation. Ubiquitination and degradation are required to terminate the checkpoint and ensure that activated CHEK1 does not accumulate as cells progress through S phase, when replication forks encounter transient impediments during normal DNA replication. 'Lys-63'-mediated ubiquitination by TRAF4 at Lys-132 activates cell cycle arrest and activation of DNA repair. Proteolytically cleaved at the C-terminus by SPRTN during normal DNA replication, thereby promoting CHEK1 removal from chromatin and activating the protein kinase activity. In terms of tissue distribution, expressed ubiquitously with the most abundant expression in thymus, testis, small intestine and colon.

It localises to the nucleus. The protein resides in the chromosome. It is found in the cytoplasm. Its subcellular location is the cytoskeleton. The protein localises to the microtubule organizing center. It localises to the centrosome. It carries out the reaction L-seryl-[protein] + ATP = O-phospho-L-seryl-[protein] + ADP + H(+). It catalyses the reaction L-threonyl-[protein] + ATP = O-phospho-L-threonyl-[protein] + ADP + H(+). Activated through phosphorylation predominantly by ATR but also by ATM in response to DNA damage or inhibition of DNA replication. Activation is modulated by several mediators including CLSPN, BRCA1 and FEM1B. Proteolytic cleavage at the C-terminus by SPRTN during normal DNA replication activates the protein kinase activity. Serine/threonine-protein kinase which is required for checkpoint-mediated cell cycle arrest and activation of DNA repair in response to the presence of DNA damage or unreplicated DNA. May also negatively regulate cell cycle progression during unperturbed cell cycles. This regulation is achieved by a number of mechanisms that together help to preserve the integrity of the genome. Recognizes the substrate consensus sequence [R-X-X-S/T]. Binds to and phosphorylates CDC25A, CDC25B and CDC25C. Phosphorylation of CDC25A at 'Ser-178' and 'Thr-507' and phosphorylation of CDC25C at 'Ser-216' creates binding sites for 14-3-3 proteins which inhibit CDC25A and CDC25C. Phosphorylation of CDC25A at 'Ser-76', 'Ser-124', 'Ser-178', 'Ser-279' and 'Ser-293' promotes proteolysis of CDC25A. Phosphorylation of CDC25A at 'Ser-76' primes the protein for subsequent phosphorylation at 'Ser-79', 'Ser-82' and 'Ser-88' by NEK11, which is required for polyubiquitination and degradation of CDCD25A. Inhibition of CDC25 leads to increased inhibitory tyrosine phosphorylation of CDK-cyclin complexes and blocks cell cycle progression. Also phosphorylates NEK6. Binds to and phosphorylates RAD51 at 'Thr-309', which promotes the release of RAD51 from BRCA2 and enhances the association of RAD51 with chromatin, thereby promoting DNA repair by homologous recombination. Phosphorylates multiple sites within the C-terminus of TP53, which promotes activation of TP53 by acetylation and promotes cell cycle arrest and suppression of cellular proliferation. Also promotes repair of DNA cross-links through phosphorylation of FANCE. Binds to and phosphorylates TLK1 at 'Ser-743', which prevents the TLK1-dependent phosphorylation of the chromatin assembly factor ASF1A. This may enhance chromatin assembly both in the presence or absence of DNA damage. May also play a role in replication fork maintenance through regulation of PCNA. May regulate the transcription of genes that regulate cell-cycle progression through the phosphorylation of histones. Phosphorylates histone H3.1 (to form H3T11ph), which leads to epigenetic inhibition of a subset of genes. May also phosphorylate RB1 to promote its interaction with the E2F family of transcription factors and subsequent cell cycle arrest. Phosphorylates SPRTN, promoting SPRTN recruitment to chromatin. Reduces replication stress and activates the G2/M checkpoint, by phosphorylating and inactivating PABIR1/FAM122A and promoting the serine/threonine-protein phosphatase 2A-mediated dephosphorylation and stabilization of WEE1 levels and activity. Functionally, endogenous repressor of isoform 1, interacts with, and antagonizes CHK1 to promote the S to G2/M phase transition. In Homo sapiens (Human), this protein is Serine/threonine-protein kinase Chk1 (CHEK1).